The chain runs to 66 residues: DNA gyrase inhibitor YacG (66 aa).

Positions 9, 12, 28, and 32 each coordinate Zn(2+). The interval 45 to 66 (HKIAGSQESEDELYSGDLEPRH) is disordered.

This sequence belongs to the DNA gyrase inhibitor YacG family. Interacts with GyrB. It depends on Zn(2+) as a cofactor.

Inhibits all the catalytic activities of DNA gyrase by preventing its interaction with DNA. Acts by binding directly to the C-terminal domain of GyrB, which probably disrupts DNA binding by the gyrase. This is DNA gyrase inhibitor YacG from Pseudomonas putida (strain W619).